The sequence spans 233 residues: LexA repressor (233 aa).

The segment at residues 26-46 is a DNA-binding region (H-T-H motif); the sequence is FEEMKEALDLKSKSGVHRLIS. Residues Ser153 and Lys191 each act as for autocatalytic cleavage activity in the active site.

Belongs to the peptidase S24 family. Homodimer.

It catalyses the reaction Hydrolysis of Ala-|-Gly bond in repressor LexA.. Its function is as follows. Represses a number of genes involved in the response to DNA damage (SOS response), including recA and lexA. In the presence of single-stranded DNA, RecA interacts with LexA causing an autocatalytic cleavage which disrupts the DNA-binding part of LexA, leading to derepression of the SOS regulon and eventually DNA repair. This chain is LexA repressor, found in Erythrobacter litoralis (strain HTCC2594).